Reading from the N-terminus, the 429-residue chain is Integral membrane protein GPR137C (429 aa).

Low complexity predominate over residues 1 to 17; it reads MRVSVPGPAAAAAPAAG. The tract at residues 1-29 is disordered; that stretch reads MRVSVPGPAAAAAPAAGREPSTPGGGSGG. Residues 1-48 are Lumenal-facing; that stretch reads MRVSVPGPAAAAAPAAGREPSTPGGGSGGGGAVAAASGAAVPGSVQLA. The helical transmembrane segment at 49–69 threads the bilayer; the sequence is LSVLHALLYAALFAFAYLQLW. At 70–83 the chain is on the cytoplasmic side; sequence RLLLYRERRLSYQS. A helical membrane pass occupies residues 84-104; the sequence is LCLFLCLLWAALRTTLFSAAF. Residues 105-120 are Lumenal-facing; sequence SLSGSLPLLRPPAHLH. The helical transmembrane segment at 121–141 threads the bilayer; sequence FFPHWLLYCFPSCLQFSTLCL. The Cytoplasmic segment spans residues 142–167; the sequence is LNLYLAEVICKVRCATELDRHKILLH. The helical transmembrane segment at 168–188 threads the bilayer; the sequence is LGFIMASLLFLVVNLTCAMLV. The Lumenal segment spans residues 189-205; it reads HGDVPENQLKWTVFVRA. The chain crosses the membrane as a helical span at residues 206-226; that stretch reads LINDSLFILCAISLVCYICKI. At 227 to 246 the chain is on the cytoplasmic side; sequence TKMSSANVYLESKGMSLCQT. A helical transmembrane segment spans residues 247–267; it reads VVVGSVVILLYSSRACYNLVV. Topologically, residues 268 to 300 are lumenal; sequence VTISQDTLESPFNYGWDNLSDKAHVEDISGEEY. A glycan (N-linked (GlcNAc...) asparagine) is linked at Asn285. A helical transmembrane segment spans residues 301–321; sequence IVFGMVLFLWEHVPAWSVVLF. Residues 322 to 429 lie on the Cytoplasmic side of the membrane; the sequence is FRAQRLNQNL…HHSLYVTPQN (108 aa).

Belongs to the GPR137 family.

It localises to the lysosome membrane. Functionally, lysosomal integral membrane protein that may regulate MTORC1 complex translocation to lysosomes. The chain is Integral membrane protein GPR137C (GPR137C) from Homo sapiens (Human).